A 374-amino-acid polypeptide reads, in one-letter code: MDSRRMSRPRQIKFEEGWSNIQKGITKLIRILEGEPEPTFYFSECFKLYTIIYDMCVQRSDYSQQLYEKYRKVIEDYTIQTVLPSLREKHDEDMLRELVKRWNNHKIMVKWLSKFFVYIDRHLVRRSKIPIPSLDEVGLTCFLDLVYCEMQSTAKEVVIALIHKEREGEQIDRALVKNVLDIYVENGMGTLEKYEEDFESFMLQDTASYYSRKASRWTEEDSCPDYMIKVEECLKMERERVTHYLHSITEPKLVEKIQNELLVMVTKNRLENEHSGFSALLRDDKKNDLSRIYRLYLPIPKRLGRVADLFKKHITEEGNALIKQADDKTTNQLLIELHNKFIVYVIECFQNHTLFHKVRVLFMCVYLFQQYYIE.

It belongs to the cullin family.

This chain is Putative cullin-like protein 2, found in Arabidopsis thaliana (Mouse-ear cress).